Reading from the N-terminus, the 174-residue chain is I-Kappa-B like protein C1 (174 aa).

ANK repeat units follow at residues 56 to 88 (RGRQCIHMVALYDRKNAIMKIEILVNMGADINA) and 93 to 123 (TGNSLLHIAVKTKNYELAEWLCREPTVNLGA).

It belongs to the polydnaviridae I-Kappa-B-like protein family.

In terms of biological role, suppresses the host immune response through NF-kappa-B inactivation. Possesses ankyrin repeat domains required for NF-kappa-B binding but lacks the regulatory regions required for dissociation from NF-kappa-B and degradation. Therefore, prevents host NF-kappa-B release and subsequent activation. In Microplitis demolitor bracovirus (isolate Webb) (MdBV), this protein is I-Kappa-B like protein C1 (C1).